A 205-amino-acid polypeptide reads, in one-letter code: Holliday junction branch migration complex subunit RuvA (205 aa).

The tract at residues 1 to 64 (MIGKLKGLID…EDQIKLFGFR (64 aa)) is domain I. Residues 65–143 (SDLEREWFRL…GFASVDPAVA (79 aa)) are domain II. The interval 144-153 (HLSGAIEERS) is flexible linker. The segment at 153–205 (SAPRPVADAISALVNLGYGQPQAAAAIAAAARSAGDAAQTAQLIKLGLKELSK) is domain III.

The protein belongs to the RuvA family. Homotetramer. Forms an RuvA(8)-RuvB(12)-Holliday junction (HJ) complex. HJ DNA is sandwiched between 2 RuvA tetramers; dsDNA enters through RuvA and exits via RuvB. An RuvB hexamer assembles on each DNA strand where it exits the tetramer. Each RuvB hexamer is contacted by two RuvA subunits (via domain III) on 2 adjacent RuvB subunits; this complex drives branch migration. In the full resolvosome a probable DNA-RuvA(4)-RuvB(12)-RuvC(2) complex forms which resolves the HJ.

The protein localises to the cytoplasm. Functionally, the RuvA-RuvB-RuvC complex processes Holliday junction (HJ) DNA during genetic recombination and DNA repair, while the RuvA-RuvB complex plays an important role in the rescue of blocked DNA replication forks via replication fork reversal (RFR). RuvA specifically binds to HJ cruciform DNA, conferring on it an open structure. The RuvB hexamer acts as an ATP-dependent pump, pulling dsDNA into and through the RuvAB complex. HJ branch migration allows RuvC to scan DNA until it finds its consensus sequence, where it cleaves and resolves the cruciform DNA. The polypeptide is Holliday junction branch migration complex subunit RuvA (Rhodopseudomonas palustris (strain BisA53)).